A 118-amino-acid chain; its full sequence is Appetite-regulating hormone (118 aa).

An N-terminal signal peptide occupies residues 1-24; it reads MPSTGTICSLLLLSVLLMADLAMA. Ser27 carries O-decanoyl serine; alternate lipidation. Residue Ser27 is the site of O-hexanoyl serine; alternate attachment. Ser27 is lipidated: O-octanoyl serine; alternate. Positions 29–50 are disordered; the sequence is LSPEHQKVQQRKESKKPAAKLK. Over residues 32 to 44 the composition is skewed to basic and acidic residues; that stretch reads EHQKVQQRKESKK. Residues 53–76 constitute a propeptide, removed in mature form; the sequence is ALEGWLGPEDSGEVEGTEDKLEIR. Leu99 carries the post-translational modification Leucine amide. The propeptide at 100–118 is removed in mature form; that stretch reads GKFLQDILWEEVTEAPADK.

This sequence belongs to the motilin family. In terms of processing, O-octanoylated by GOAT/MBOAT4. O-octanoylation is essential for ghrelin activity. Amidation of Leu-99 is essential for obestatin activity.

The protein localises to the secreted. In terms of biological role, ghrelin is the ligand for growth hormone secretagogue receptor type 1 (GHSR). Induces the release of growth hormone from the pituitary. Has an appetite-stimulating effect, induces adiposity and stimulates gastric acid secretion. Involved in growth regulation. Obestatin may be the ligand for GPR39. May have an appetite-reducing effect resulting in decreased food intake. May reduce gastric emptying activity and jejunal motility. The sequence is that of Appetite-regulating hormone (GHRL) from Sus scrofa (Pig).